We begin with the raw amino-acid sequence, 2077 residues long: Large tegument protein deneddylase (2077 aa).

A deubiquitination activity region spans residues methionine 1 to phenylalanine 231. Residues isoleucine 3–aspartate 221 enclose the Peptidase C76 domain. Active-site residues include cysteine 23, aspartate 156, and histidine 158. Position 287 (serine 287) is a region of interest, interaction with inner tegument protein. The disordered stretch occupies residues proline 1982–leucine 2004.

The protein belongs to the herpesviridae large tegument protein family. As to quaternary structure, interacts with host CUL1 and CUL4A; these interactions inhibit the E3 ligase activity of cullins. Interacts with inner tegument protein. Interacts with capsid vertex specific component CVC2. Interacts with the major capsid protein/MCP.

The protein resides in the virion tegument. It is found in the host cytoplasm. It localises to the host nucleus. The catalysed reaction is Thiol-dependent hydrolysis of ester, thioester, amide, peptide and isopeptide bonds formed by the C-terminal Gly of ubiquitin (a 76-residue protein attached to proteins as an intracellular targeting signal).. Its function is as follows. Large tegument protein that plays multiple roles in the viral cycle. During viral entry, remains associated with the capsid while most of the tegument is detached and participates in the capsid transport toward the host nucleus. Plays a role in the routing of the capsid at the nuclear pore complex and subsequent uncoating. Within the host nucleus, acts as a deneddylase and promotes the degradation of nuclear CRLs (cullin-RING ubiquitin ligases) and thereby stabilizes nuclear CRL substrates, while cytoplasmic CRLs remain unaffected. These modifications prevent host cell cycle S-phase progression and create a favorable environment allowing efficient viral genome replication. Participates later in the secondary envelopment of capsids. Indeed, plays a linker role for the association of the outer viral tegument to the capsids together with the inner tegument protein. The chain is Large tegument protein deneddylase (U31) from Homo sapiens (Human).